The primary structure comprises 384 residues: Beta-ureidopropionase (384 aa).

Positions 72 to 344 (VHVGLVQNRI…DGLLVAKLDL (273 aa)) constitute a CN hydrolase domain. Glu-119 acts as the Proton acceptor in catalysis. Lys-196 acts as the Proton donor in catalysis. Catalysis depends on Cys-233, which acts as the Nucleophile. Ser-378 bears the Phosphoserine mark.

It belongs to the carbon-nitrogen hydrolase superfamily. BUP family. Homodimer, homotetramer, homooctamer; can also form higher homooligomers. Detected in liver (at protein level).

Its subcellular location is the cytoplasm. It carries out the reaction 3-(carbamoylamino)propanoate + H2O + 2 H(+) = beta-alanine + NH4(+) + CO2. The catalysed reaction is 3-(carbamoylamino)-2-methylpropanoate + H2O + 2 H(+) = (R)-3-amino-2-methylpropanoate + NH4(+) + CO2. It functions in the pathway amino-acid biosynthesis; beta-alanine biosynthesis. With respect to regulation, strongly inhibited by 50 mM Zn(2+). Not inhibited by EDTA. Competitively inhibited by beta-alanine, 5-aminolevulinic acid (ALA), beta-aminoisobutyrate and 4-ureidobutyrate. Catalyzes a late step in pyrimidine degradation. Converts N-carbamoyl-beta-alanine (3-ureidopropanoate) into beta-alanine, ammonia and carbon dioxide. Likewise, converts N-carbamoyl-beta-aminoisobutyrate (3-ureidoisobutyrate) into beta-aminoisobutyrate, ammonia and carbon dioxide. This is Beta-ureidopropionase (UPB1) from Homo sapiens (Human).